Consider the following 129-residue polypeptide: UPF0212 protein Mbar_A2902 (129 aa).

It belongs to the UPF0212 family.

This chain is UPF0212 protein Mbar_A2902, found in Methanosarcina barkeri (strain Fusaro / DSM 804).